The chain runs to 617 residues: UvrABC system protein C (617 aa).

One can recognise a GIY-YIG domain in the interval 22–100; sequence KLPGVYRFFD…IKALSPKYNI (79 aa). Residues 209-244 enclose the UVR domain; the sequence is DELTRTLQHKMQTAAANLQFEEAARYRDQIQALGII.

Belongs to the UvrC family. Interacts with UvrB in an incision complex.

It localises to the cytoplasm. The UvrABC repair system catalyzes the recognition and processing of DNA lesions. UvrC both incises the 5' and 3' sides of the lesion. The N-terminal half is responsible for the 3' incision and the C-terminal half is responsible for the 5' incision. The protein is UvrABC system protein C of Neisseria gonorrhoeae (strain ATCC 700825 / FA 1090).